The chain runs to 346 residues: Parapinopsin (346 aa).

The Extracellular segment spans residues 1–29 (MASIILINFSETDTLHLGSVNDHIMPRIG). A glycan (N-linked (GlcNAc...) asparagine) is linked at N8. A helical transmembrane segment spans residues 30–54 (YTILSIIMALSSTFGIILNMVVIIV). Over 55–66 (TVRYKQLRQPLN) the chain is Cytoplasmic. Residues 67–91 (YALVNLAVADLGCPVFGGLLTAVTN) form a helical membrane-spanning segment. Residues 92-106 (AMGYFSLGRVGCVLE) are Extracellular-facing. A disulfide bond links C103 and C180. Residues 107–126 (GFAVAFFGIAGLCSVAVIAV) traverse the membrane as a helical segment. At 127-145 (DRYMVVCRPLGAVMFQTKH) the chain is on the cytoplasmic side. The helical transmembrane segment at 146 to 169 (ALAGVVFSWVWSFIWNTPPLFGWG) threads the bilayer. Over 170-193 (SYQLEGVMTSCAPNWYRRDPVNVS) the chain is Extracellular. N191 carries N-linked (GlcNAc...) asparagine glycosylation. The chain crosses the membrane as a helical span at residues 194–221 (YILCYFMLCFALPFATIIFSYMHLLHTL). Residues 222–244 (WQVAKLQVADSGSTAKVEVQVAR) lie on the Cytoplasmic side of the membrane. Residues 245–268 (MVVIMVMAFLLTWLPYAAFALTVI) form a helical membrane-spanning segment. Over 269–276 (IDSNIYIN) the chain is Extracellular. A helical membrane pass occupies residues 277–301 (PVIGTIPAYLAKSSTVFNPIIYIFM). K288 bears the N6-(retinylidene)lysine mark. The Cytoplasmic portion of the chain corresponds to 302–346 (NRQFRDYALPCLLCGKNPWAAKEGRDSDTNTLTTTVSKNTSVSPL). C315 carries the S-palmitoyl cysteine lipid modification. Positions 325 to 346 (GRDSDTNTLTTTVSKNTSVSPL) are disordered. Over residues 330 to 346 (TNTLTTTVSKNTSVSPL) the composition is skewed to low complexity.

Belongs to the G-protein coupled receptor 1 family. Opsin subfamily. In terms of processing, phosphorylated on some or all of the serine and threonine residues present in the C-terminal region. Parapineal organ.

The protein localises to the membrane. In Ictalurus punctatus (Channel catfish), this protein is Parapinopsin.